A 269-amino-acid chain; its full sequence is Hydroxyethylthiazole kinase (269 aa).

Residue M42 participates in substrate binding. Positions 118 and 164 each coordinate ATP. G191 lines the substrate pocket.

It belongs to the Thz kinase family. The cofactor is Mg(2+).

The catalysed reaction is 5-(2-hydroxyethyl)-4-methylthiazole + ATP = 4-methyl-5-(2-phosphooxyethyl)-thiazole + ADP + H(+). It functions in the pathway cofactor biosynthesis; thiamine diphosphate biosynthesis; 4-methyl-5-(2-phosphoethyl)-thiazole from 5-(2-hydroxyethyl)-4-methylthiazole: step 1/1. Functionally, catalyzes the phosphorylation of the hydroxyl group of 4-methyl-5-beta-hydroxyethylthiazole (THZ). The sequence is that of Hydroxyethylthiazole kinase from Listeria monocytogenes serotype 4b (strain F2365).